The chain runs to 272 residues: Undecaprenyl-diphosphatase (272 aa).

7 helical membrane-spanning segments follow: residues Phe-2–Ile-22, Phe-43–Tyr-63, Trp-82–Leu-102, Leu-110–Leu-130, Tyr-185–Ile-205, Val-224–Leu-244, and Phe-252–Ile-272.

It belongs to the UppP family.

The protein localises to the cell membrane. It carries out the reaction di-trans,octa-cis-undecaprenyl diphosphate + H2O = di-trans,octa-cis-undecaprenyl phosphate + phosphate + H(+). Its function is as follows. Catalyzes the dephosphorylation of undecaprenyl diphosphate (UPP). Confers resistance to bacitracin. The sequence is that of Undecaprenyl-diphosphatase from Lacticaseibacillus casei (strain BL23) (Lactobacillus casei).